The chain runs to 765 residues: Ankyrin repeat and protein kinase domain-containing protein 1 (765 aa).

Residues 22 to 289 enclose the Protein kinase domain; it reads EGDWRLVASG…DITIETDILL (268 aa). ATP-binding positions include 28–36 and lysine 51; that span reads VASGGFSQV. Catalysis depends on aspartate 145, which acts as the Proton acceptor. ANK repeat units lie at residues 361-390, 394-423, 427-456, 460-489, 493-522, 526-555, 559-588, 592-621, 625-654, 658-687, 691-720, and 724-753; these read NKVT…DVDC, SGYT…DANR, DGWA…CVDA, EGWT…DPNL, EGKT…ELDA, NLRT…VPDA, SGYG…SLEL, QGWT…NMGA, VNWT…DPNA, SGWT…NVHA, VGWT…QLDV, and VSCT…SVAT.

This sequence belongs to the protein kinase superfamily. TKL Ser/Thr protein kinase family. In terms of tissue distribution, highly expressed in brain and weakly expressed in placenta and spinal cord.

The enzyme catalyses L-seryl-[protein] + ATP = O-phospho-L-seryl-[protein] + ADP + H(+). The catalysed reaction is L-threonyl-[protein] + ATP = O-phospho-L-threonyl-[protein] + ADP + H(+). The sequence is that of Ankyrin repeat and protein kinase domain-containing protein 1 (ANKK1) from Homo sapiens (Human).